We begin with the raw amino-acid sequence, 90 residues long: Progonadoliberin-1 (90 aa).

A signal peptide spans 1 to 21 (MILKLMAGILLLTVCLEGCSS). A Pyrrolidone carboxylic acid modification is found at Gln-22. A Glycine amide modification is found at Gly-31.

Belongs to the GnRH family. In terms of processing, the precursor is cleaved by ACE, which removes the Gly-Lys-Arg peptide at the C-terminus, leading to mature hormone. The mature form of Gonadoliberin-1 is also cleaved and degraded by ACE.

It is found in the secreted. In terms of biological role, stimulates the secretion of gonadotropins; it stimulates the secretion of both luteinizing and follicle-stimulating hormones. This chain is Progonadoliberin-1 (Gnrh1), found in Mus musculus (Mouse).